A 667-amino-acid chain; its full sequence is DNA ligase (667 aa).

Residues 32–36 (DSEYD), 81–82 (SL), and E110 contribute to the NAD(+) site. The N6-AMP-lysine intermediate role is filled by K112. Residues R133, E167, K283, and K307 each coordinate NAD(+). C401, C404, C419, and C424 together coordinate Zn(2+). The region spanning 586-667 (EGHPEFSGKT…FVDKQNELNS (82 aa)) is the BRCT domain.

This sequence belongs to the NAD-dependent DNA ligase family. LigA subfamily. Mg(2+) serves as cofactor. Mn(2+) is required as a cofactor.

It carries out the reaction NAD(+) + (deoxyribonucleotide)n-3'-hydroxyl + 5'-phospho-(deoxyribonucleotide)m = (deoxyribonucleotide)n+m + AMP + beta-nicotinamide D-nucleotide.. Functionally, DNA ligase that catalyzes the formation of phosphodiester linkages between 5'-phosphoryl and 3'-hydroxyl groups in double-stranded DNA using NAD as a coenzyme and as the energy source for the reaction. It is essential for DNA replication and repair of damaged DNA. This chain is DNA ligase, found in Staphylococcus aureus (strain bovine RF122 / ET3-1).